The sequence spans 1347 residues: Spermatogenesis-associated protein 31A3 (1347 aa).

A helical membrane pass occupies residues 23–43; it reads PWVLDIFLTLVFALGFFFLLL. 8 disordered regions span residues 55 to 87, 108 to 142, 154 to 235, 373 to 397, 627 to 658, 900 to 955, 1084 to 1161, and 1313 to 1335; these read PSPS…GREC, HLDK…HEPM, SPDP…STLI, EQDT…GPQK, QDES…EAQK, RGIP…REAV, VHEE…PSVS, and KAVS…SHHH. Over residues 60–82 the composition is skewed to basic residues; sequence GKRKCPVGRRRRPRGRMKNHSLR. A compositionally biased stretch (polar residues) spans 165 to 178; the sequence is LASTPSPGPMTTSV. The span at 198 to 211 shows a compositional bias: pro residues; the sequence is PEPPALFPHPPHTP. Polar residues-rich tracts occupy residues 627–651 and 927–948; these read QDES…STGE and LTYS…SSKA. Composition is skewed to basic and acidic residues over residues 1108–1127 and 1137–1146; these read HKSE…RLEG and RKTEDTHQDE.

Belongs to the SPATA31 family.

It localises to the membrane. Its function is as follows. May play a role in spermatogenesis. This is Spermatogenesis-associated protein 31A3 (SPATA31A3) from Homo sapiens (Human).